We begin with the raw amino-acid sequence, 149 residues long: UPF0260 protein Pmen_1776 (149 aa).

This sequence belongs to the UPF0260 family.

This Ectopseudomonas mendocina (strain ymp) (Pseudomonas mendocina) protein is UPF0260 protein Pmen_1776.